The primary structure comprises 914 residues: Penicillin-binding protein 1A/1B (914 aa).

The disordered stretch occupies residues 1–29; that stretch reads MSDQFNSREARRKANSKSSPSPKKGKKRK. The Cytoplasmic segment spans residues 1 to 37; it reads MSDQFNSREARRKANSKSSPSPKKGKKRKKGGLFKKT. Residues 38-58 traverse the membrane as a helical; Signal-anchor for type II membrane protein segment; the sequence is LFTLLILFVLGVVGGAVTFAV. The Extracellular segment spans residues 59-914; sequence MVSDAPSLDE…TNSSSIEKTN (856 aa). Residues 77–246 form a transglycosylase region; it reads STIYDKNGKE…TAYNPVKNPD (170 aa). E115 (proton donor; for transglycosylase activity) is an active-site residue. The segment at 329–662 is transpeptidase; that stretch reads TKAQDKLDEL…PDSVVEATVE (334 aa). The Acyl-ester intermediate; for transpeptidase activity role is filled by S390. The region spanning 708 to 795 is the Fibronectin type-III domain; it reads KLSGLNVKYD…SYEVPKAEDD (88 aa). Residues 773 to 914 form a disordered region; sequence TAVSDDGKST…TNSSSIEKTN (142 aa). Residues 798-828 show a composition bias toward basic and acidic residues; it reads KKDQQQTDDEKQDDEKTQDDTQTDDSQKDDG. The segment covering 829–840 has biased composition (acidic residues); the sequence is QTDQDQTDDSTN. Composition is skewed to low complexity over residues 848–892 and 900–914; these read NTNT…GSDT and SNKT…EKTN.

This sequence in the N-terminal section; belongs to the glycosyltransferase 51 family. In the C-terminal section; belongs to the transpeptidase family. Post-translationally, the product expressed from the translation of the ponA gene appears as two bands on a gel (1A and 1B), but the specific amino acid sequence of each protein is unknown. The N-terminus is blocked.

Its subcellular location is the cell membrane. It is found in the forespore inner membrane. The enzyme catalyses [GlcNAc-(1-&gt;4)-Mur2Ac(oyl-L-Ala-gamma-D-Glu-L-Lys-D-Ala-D-Ala)](n)-di-trans,octa-cis-undecaprenyl diphosphate + beta-D-GlcNAc-(1-&gt;4)-Mur2Ac(oyl-L-Ala-gamma-D-Glu-L-Lys-D-Ala-D-Ala)-di-trans,octa-cis-undecaprenyl diphosphate = [GlcNAc-(1-&gt;4)-Mur2Ac(oyl-L-Ala-gamma-D-Glu-L-Lys-D-Ala-D-Ala)](n+1)-di-trans,octa-cis-undecaprenyl diphosphate + di-trans,octa-cis-undecaprenyl diphosphate + H(+). The catalysed reaction is Preferential cleavage: (Ac)2-L-Lys-D-Ala-|-D-Ala. Also transpeptidation of peptidyl-alanyl moieties that are N-acyl substituents of D-alanine.. It functions in the pathway cell wall biogenesis; peptidoglycan biosynthesis. Cell wall formation. Synthesis of cross-linked peptidoglycan from the lipid intermediates. The enzyme has a penicillin-insensitive transglycosylase N-terminal domain (formation of linear glycan strands) and a penicillin-sensitive transpeptidase C-terminal domain (cross-linking of the peptide subunits). Required for vegetative growth. Has a partially redundant function with PBP-2A (pbpA) during spore outgrowth. The sequence is that of Penicillin-binding protein 1A/1B (ponA) from Bacillus subtilis (strain 168).